Here is a 288-residue protein sequence, read N- to C-terminus: Nucleotide-binding protein Mlg_2233 (288 aa).

Residue 11-18 (GLSGSGKS) participates in ATP binding. 63–66 (DARN) serves as a coordination point for GTP.

It belongs to the RapZ-like family.

Functionally, displays ATPase and GTPase activities. In Alkalilimnicola ehrlichii (strain ATCC BAA-1101 / DSM 17681 / MLHE-1), this protein is Nucleotide-binding protein Mlg_2233.